The sequence spans 319 residues: Acetyl-coenzyme A carboxylase carboxyl transferase subunit alpha (319 aa).

The CoA carboxyltransferase C-terminal domain occupies 38–293 (HALQDKLRMR…KAVLLNELDA (256 aa)).

This sequence belongs to the AccA family. Acetyl-CoA carboxylase is a heterohexamer composed of biotin carboxyl carrier protein (AccB), biotin carboxylase (AccC) and two subunits each of ACCase subunit alpha (AccA) and ACCase subunit beta (AccD).

It localises to the cytoplasm. The enzyme catalyses N(6)-carboxybiotinyl-L-lysyl-[protein] + acetyl-CoA = N(6)-biotinyl-L-lysyl-[protein] + malonyl-CoA. The protein operates within lipid metabolism; malonyl-CoA biosynthesis; malonyl-CoA from acetyl-CoA: step 1/1. Its function is as follows. Component of the acetyl coenzyme A carboxylase (ACC) complex. First, biotin carboxylase catalyzes the carboxylation of biotin on its carrier protein (BCCP) and then the CO(2) group is transferred by the carboxyltransferase to acetyl-CoA to form malonyl-CoA. This chain is Acetyl-coenzyme A carboxylase carboxyl transferase subunit alpha, found in Stenotrophomonas maltophilia (strain K279a).